A 706-amino-acid polypeptide reads, in one-letter code: SPX domain-containing membrane protein OsI_32082 (706 aa).

The 144-residue stretch at 2-145 (VNFSNKLTKD…GYKFTDYYVR (144 aa)) folds into the SPX domain. The next 6 membrane-spanning stretches (helical) occupy residues 251 to 271 (MSLVLNLANTFLYMVNTYIVV), 281 to 301 (LGAAATACGAVIGSMAVAQVF), 318 to 338 (LLFSSVVLLLGNVMYAMAFDL), 340 to 359 (SLTILLLGRVLCGMGSARAV), 378 to 398 (AAFVSASALGMACGPALAGLL), and 414 to 434 (LPGWIMAFGWLVYLIWLWISF). A disordered region spans residues 475–498 (SEQDEEDDNGDEEHNETLSSSTTT). The segment covering 476–488 (EQDEEDDNGDEEH) has biased composition (acidic residues). 5 helical membrane-spanning segments follow: residues 520–540 (LLIYFMLKYAMEILLAESSVV), 554–574 (VFLAVLGLSVLPVNAIVGTYI), 583–603 (ILVASEMALLAGVMLSFKLTV), 611–631 (VCSAVLTFVSAEVVEGVNLSL), and 678–698 (LLNATLLPALLVCVASIAATL).

This sequence belongs to the major facilitator superfamily.

The protein localises to the membrane. The sequence is that of SPX domain-containing membrane protein OsI_32082 from Oryza sativa subsp. indica (Rice).